Reading from the N-terminus, the 634-residue chain is Chaperone protein dnaK2 (634 aa).

T197 is subject to Phosphothreonine; by autocatalysis. A disordered region spans residues 592–634 (IGSSVYQQPGNQPPAPGTPDSNESNDKGGDDDVIDADFTETKD). Over residues 622–634 (DDVIDADFTETKD) the composition is skewed to acidic residues.

The protein belongs to the heat shock protein 70 family.

Functionally, acts as a chaperone. In Prochlorococcus marinus subsp. pastoris (strain CCMP1986 / NIES-2087 / MED4), this protein is Chaperone protein dnaK2 (dnaK2).